A 55-amino-acid chain; its full sequence is Large ribosomal subunit protein bL33 (55 aa).

Belongs to the bacterial ribosomal protein bL33 family.

The protein is Large ribosomal subunit protein bL33 of Gluconobacter oxydans (strain 621H) (Gluconobacter suboxydans).